Here is a 698-residue protein sequence, read N- to C-terminus: Polyphosphate kinase (698 aa).

ATP is bound at residue Asn63. Arg390 and Arg420 together coordinate Mg(2+). His450 functions as the Phosphohistidine intermediate in the catalytic mechanism. Positions 483, 579, and 607 each coordinate ATP.

It belongs to the polyphosphate kinase 1 (PPK1) family. Mg(2+) serves as cofactor. Post-translationally, an intermediate of this reaction is the autophosphorylated ppk in which a phosphate is covalently linked to a histidine residue through a N-P bond.

It catalyses the reaction [phosphate](n) + ATP = [phosphate](n+1) + ADP. Its function is as follows. Catalyzes the reversible transfer of the terminal phosphate of ATP to form a long-chain polyphosphate (polyP). This Xylella fastidiosa (strain Temecula1 / ATCC 700964) protein is Polyphosphate kinase.